Reading from the N-terminus, the 132-residue chain is FPRL1 inhibitory protein (132 aa).

The signal sequence occupies residues M1–A28.

This sequence belongs to the CHIPS/FLIPr family.

It localises to the secreted. Its function is as follows. May be involved in countering the first line of host defense mechanisms. Impairs the leukocyte response to FPRL1 agonists by binding directly to host FPRL1. This Staphylococcus aureus (strain MW2) protein is FPRL1 inhibitory protein (flr).